The following is a 397-amino-acid chain: Phosphoglycerate kinase (397 aa).

Residues 22 to 24, Arg-38, 61 to 64, Arg-119, and Arg-152 each bind substrate; these read DYN and HLGR. Residues Lys-203, Gly-294, Glu-325, and 351–354 each bind ATP; that span reads GGDT.

It belongs to the phosphoglycerate kinase family. In terms of assembly, monomer.

The protein localises to the cytoplasm. The enzyme catalyses (2R)-3-phosphoglycerate + ATP = (2R)-3-phospho-glyceroyl phosphate + ADP. Its pathway is carbohydrate degradation; glycolysis; pyruvate from D-glyceraldehyde 3-phosphate: step 2/5. In Aquifex aeolicus (strain VF5), this protein is Phosphoglycerate kinase (pgk).